We begin with the raw amino-acid sequence, 215 residues long: Cytochrome b6 (215 aa).

A helical transmembrane segment spans residues 32 to 52 (IFYCFGGITLTCFLIQVATGF). Cysteine 35 lines the heme c pocket. Heme b contacts are provided by histidine 86 and histidine 100. The next 3 membrane-spanning stretches (helical) occupy residues 90–110 (ASMMVMMLILHVFRVYLTGGF), 116–136 (LTWVTGVILAVITVSFGVTGY), and 186–206 (LHTFVLPLLTAVFMLMHFLMI). Heme b is bound by residues histidine 187 and histidine 202.

This sequence belongs to the cytochrome b family. PetB subfamily. The 4 large subunits of the cytochrome b6-f complex are cytochrome b6, subunit IV (17 kDa polypeptide, PetD), cytochrome f and the Rieske protein, while the 4 small subunits are PetG, PetL, PetM and PetN. The complex functions as a dimer. The cofactor is heme b. Requires heme c as cofactor.

Its subcellular location is the plastid. The protein localises to the chloroplast thylakoid membrane. Its function is as follows. Component of the cytochrome b6-f complex, which mediates electron transfer between photosystem II (PSII) and photosystem I (PSI), cyclic electron flow around PSI, and state transitions. The protein is Cytochrome b6 of Nephroselmis olivacea (Green alga).